Consider the following 376-residue polypeptide: D-alanine--D-alanine ligase (376 aa).

Positions lysine 153–glutamine 366 constitute an ATP-grasp domain. Valine 185 to glutamate 240 is a binding site for ATP. 3 residues coordinate Mg(2+): aspartate 317, glutamate 333, and asparagine 335.

The protein belongs to the D-alanine--D-alanine ligase family. Mg(2+) is required as a cofactor. It depends on Mn(2+) as a cofactor.

The protein resides in the cytoplasm. The enzyme catalyses 2 D-alanine + ATP = D-alanyl-D-alanine + ADP + phosphate + H(+). The protein operates within cell wall biogenesis; peptidoglycan biosynthesis. Its function is as follows. Cell wall formation. The chain is D-alanine--D-alanine ligase from Kineococcus radiotolerans (strain ATCC BAA-149 / DSM 14245 / SRS30216).